The chain runs to 198 residues: Endonuclease V (198 aa).

The Mg(2+) site is built by aspartate 38 and aspartate 101.

This sequence belongs to the endonuclease V family. Mg(2+) is required as a cofactor.

It is found in the cytoplasm. The catalysed reaction is Endonucleolytic cleavage at apurinic or apyrimidinic sites to products with a 5'-phosphate.. In terms of biological role, DNA repair enzyme involved in the repair of deaminated bases. Selectively cleaves double-stranded DNA at the second phosphodiester bond 3' to a deoxyinosine leaving behind the intact lesion on the nicked DNA. This chain is Endonuclease V, found in Saccharolobus islandicus (strain M.16.4 / Kamchatka #3) (Sulfolobus islandicus).